Consider the following 690-residue polypeptide: Elongation factor G (690 aa).

The tr-type G domain occupies 8–282 (KMTRNIGIMA…AVIDYLPSPL (275 aa)). Residues 17 to 24 (AHIDAGKT), 81 to 85 (DTPGH), and 135 to 138 (NKMD) each bind GTP.

This sequence belongs to the TRAFAC class translation factor GTPase superfamily. Classic translation factor GTPase family. EF-G/EF-2 subfamily.

The protein resides in the cytoplasm. Its function is as follows. Catalyzes the GTP-dependent ribosomal translocation step during translation elongation. During this step, the ribosome changes from the pre-translocational (PRE) to the post-translocational (POST) state as the newly formed A-site-bound peptidyl-tRNA and P-site-bound deacylated tRNA move to the P and E sites, respectively. Catalyzes the coordinated movement of the two tRNA molecules, the mRNA and conformational changes in the ribosome. The protein is Elongation factor G of Acholeplasma laidlawii (strain PG-8A).